A 595-amino-acid chain; its full sequence is Solute carrier family 13 member 1 (595 aa).

5 helical membrane passes run phenylalanine 13 to lysine 33, isoleucine 40 to leucine 60, valine 77 to threonine 97, valine 113 to phenylalanine 133, and leucine 134 to valine 154. Residue asparagine 174 is glycosylated (N-linked (GlcNAc...) asparagine). Residues glutamine 190–threonine 218 form a disordered region. Residues aspartate 208 to threonine 218 show a composition bias toward basic and acidic residues. Helical transmembrane passes span leucine 239–threonine 259, serine 283–leucine 303, isoleucine 348–phenylalanine 368, glycine 381–alanine 401, proline 464–leucine 484, proline 491–asparagine 511, proline 512–alanine 532, and alanine 553–isoleucine 573. An N-linked (GlcNAc...) asparagine glycan is attached at asparagine 591.

It belongs to the SLC13A/DASS transporter (TC 2.A.47) family. NADC subfamily. Kidney and intestine.

It is found in the apical cell membrane. It carries out the reaction sulfate(out) + 3 Na(+)(out) = sulfate(in) + 3 Na(+)(in). It catalyses the reaction selenate(out) + 3 Na(+)(out) = selenate(in) + 3 Na(+)(in). The catalysed reaction is thiosulfate(out) + 3 Na(+)(out) = thiosulfate(in) + 3 Na(+)(in). Functionally, sodium:sulfate symporter that mediates sulfate reabsorption in the kidney and small intestine. Can also mediate the transport of selenate and thiosulfate. This chain is Solute carrier family 13 member 1 (Slc13a1), found in Rattus norvegicus (Rat).